Consider the following 220-residue polypeptide: Uracil-DNA glycosylase (220 aa).

Residue Asp-61 is the Proton acceptor of the active site.

It belongs to the uracil-DNA glycosylase (UDG) superfamily. UNG family.

The protein localises to the cytoplasm. It carries out the reaction Hydrolyzes single-stranded DNA or mismatched double-stranded DNA and polynucleotides, releasing free uracil.. Excises uracil residues from the DNA which can arise as a result of misincorporation of dUMP residues by DNA polymerase or due to deamination of cytosine. In Glaesserella parasuis serovar 5 (strain SH0165) (Haemophilus parasuis), this protein is Uracil-DNA glycosylase.